The chain runs to 161 residues: Nucleotide-binding protein PBPRA2024 (161 aa).

It belongs to the YajQ family.

In terms of biological role, nucleotide-binding protein. The polypeptide is Nucleotide-binding protein PBPRA2024 (Photobacterium profundum (strain SS9)).